The sequence spans 141 residues: Putative pre-16S rRNA nuclease (141 aa).

This sequence belongs to the YqgF nuclease family.

Its subcellular location is the cytoplasm. In terms of biological role, could be a nuclease involved in processing of the 5'-end of pre-16S rRNA. The protein is Putative pre-16S rRNA nuclease of Roseiflexus sp. (strain RS-1).